The chain runs to 122 residues: Large ribosomal subunit protein uL14 (122 aa).

It belongs to the universal ribosomal protein uL14 family. In terms of assembly, part of the 50S ribosomal subunit. Forms a cluster with proteins L3 and L19. In the 70S ribosome, L14 and L19 interact and together make contacts with the 16S rRNA in bridges B5 and B8.

Its function is as follows. Binds to 23S rRNA. Forms part of two intersubunit bridges in the 70S ribosome. The sequence is that of Large ribosomal subunit protein uL14 from Bacillus cytotoxicus (strain DSM 22905 / CIP 110041 / 391-98 / NVH 391-98).